The sequence spans 40 residues: Natriuretic peptide TNPd (40 aa).

Cys9 and Cys25 are oxidised to a cystine.

This sequence belongs to the natriuretic peptide family. In terms of tissue distribution, expressed by the venom gland.

It is found in the secreted. Snake venom natriuretic peptide that exhibits vasoactive and hypotensive activity. Stimulates cGMP production through the natriuretic peptide receptor 1 (NPR1) with very high potencies for the rat NPR1 (EC(50)=18 nM), and very weak potencies over human NPR1 (30% activation at 10 uM). In Oxyuranus microlepidotus (Inland taipan), this protein is Natriuretic peptide TNPd.